We begin with the raw amino-acid sequence, 510 residues long: NEDD8-activating enzyme E1 regulatory subunit (510 aa).

Alanine 2 is modified (N-acetylalanine). N6-acetyllysine occurs at positions 6 and 317. The tract at residues 307–320 (DMIADSGKYIKLQN) is interaction with UBA3.

It belongs to the ubiquitin-activating E1 family. ULA1 subfamily. As to quaternary structure, heterodimer of UBA3 and NAE1. The complex binds NEDD8 and UBE2M. Binds APP and TP53BP2. Post-translationally, ubiquitinated by TRIP12, leading to its degradation by the proteasome.

It is found in the cell membrane. Its pathway is protein modification; protein neddylation. With respect to regulation, binding of TP53BP2 to the regulatory subunit NAE1 decreases neddylation activity. Functionally, regulatory subunit of the dimeric UBA3-NAE1 E1 enzyme. E1 activates NEDD8 by first adenylating its C-terminal glycine residue with ATP, thereafter linking this residue to the side chain of the catalytic cysteine, yielding a NEDD8-UBA3 thioester and free AMP. E1 finally transfers NEDD8 to the catalytic cysteine of UBE2M. Necessary for cell cycle progression through the S-M checkpoint. Overexpression of NAE1 causes apoptosis through deregulation of NEDD8 conjugation. The covalent attachment of NEDD8 to target proteins is known as 'neddylation' and the process is involved in the regulation of cell growth, viability and development. This is NEDD8-activating enzyme E1 regulatory subunit (NAE1) from Macaca fascicularis (Crab-eating macaque).